The following is a 394-amino-acid chain: Argininosuccinate synthase (394 aa).

ATP is bound at residue 8-16 (AYSGGLDTS). L-citrulline contacts are provided by tyrosine 86 and serine 91. Glycine 116 provides a ligand contact to ATP. L-aspartate is bound by residues threonine 118, asparagine 122, and aspartate 123. Asparagine 122 lines the L-citrulline pocket. 5 residues coordinate L-citrulline: arginine 126, serine 172, serine 181, glutamate 256, and tyrosine 268.

The protein belongs to the argininosuccinate synthase family. Type 1 subfamily. Homotetramer.

Its subcellular location is the cytoplasm. The enzyme catalyses L-citrulline + L-aspartate + ATP = 2-(N(omega)-L-arginino)succinate + AMP + diphosphate + H(+). It functions in the pathway amino-acid biosynthesis; L-arginine biosynthesis; L-arginine from L-ornithine and carbamoyl phosphate: step 2/3. The polypeptide is Argininosuccinate synthase (Methanococcoides burtonii (strain DSM 6242 / NBRC 107633 / OCM 468 / ACE-M)).